The primary structure comprises 408 residues: Imidazolonepropionase (408 aa).

H73 and H75 together coordinate Fe(3+). Zn(2+) contacts are provided by H73 and H75. 4-imidazolone-5-propanoate contacts are provided by R82, Y145, and H178. Residue Y145 coordinates N-formimidoyl-L-glutamate. H243 contributes to the Fe(3+) binding site. H243 provides a ligand contact to Zn(2+). Q246 contacts 4-imidazolone-5-propanoate. Fe(3+) is bound at residue D318. Residue D318 coordinates Zn(2+). Positions 320 and 322 each coordinate N-formimidoyl-L-glutamate. 4-imidazolone-5-propanoate is bound at residue S323.

Belongs to the metallo-dependent hydrolases superfamily. HutI family. Requires Zn(2+) as cofactor. The cofactor is Fe(3+).

The protein localises to the cytoplasm. The enzyme catalyses 4-imidazolone-5-propanoate + H2O = N-formimidoyl-L-glutamate. The protein operates within amino-acid degradation; L-histidine degradation into L-glutamate; N-formimidoyl-L-glutamate from L-histidine: step 3/3. Functionally, catalyzes the hydrolytic cleavage of the carbon-nitrogen bond in imidazolone-5-propanoate to yield N-formimidoyl-L-glutamate. It is the third step in the universal histidine degradation pathway. This chain is Imidazolonepropionase, found in Shewanella sp. (strain MR-4).